The sequence spans 324 residues: Malate dehydrogenase (324 aa).

Residues 20-25 and Asp44 contribute to the NAD(+) site; that span reads GAGNVG. Positions 93 and 99 each coordinate substrate. NAD(+) contacts are provided by residues Asn106 and 129–131; that span reads VTN. The substrate site is built by Asn131 and Arg162. His186 acts as the Proton acceptor in catalysis.

The protein belongs to the LDH/MDH superfamily. MDH type 3 family.

The catalysed reaction is (S)-malate + NAD(+) = oxaloacetate + NADH + H(+). Functionally, catalyzes the reversible oxidation of malate to oxaloacetate. This is Malate dehydrogenase from Synechocystis sp. (strain ATCC 27184 / PCC 6803 / Kazusa).